Reading from the N-terminus, the 619-residue chain is Manganese lipoxygenase (619 aa).

An N-terminal signal peptide occupies residues 1–16; that stretch reads MRVLVWIAGLAPLAVA. N-linked (GlcNAc...) asparagine glycans are attached at residues Asn32, Asn42, Asn62, Asn86, Asn164, and Asn229. The Lipoxygenase domain maps to 55–619; it reads TLPCEDGNST…PGNIPFYLSV (565 aa). Residues His298, His303, His483, and Asn487 each coordinate Mn(2+). Asn515 and Asn549 each carry an N-linked (GlcNAc...) asparagine glycan. Val619 contacts Mn(2+).

This sequence belongs to the lipoxygenase family. Manganese lipoxygenase subfamily. Mn(2+) is required as a cofactor.

The protein resides in the secreted. The catalysed reaction is (9Z,12Z)-octadecadienoate + O2 = (9S)-hydroperoxy-(10E,12Z)-octadecadienoate. It carries out the reaction (9Z,12Z)-octadecadienoate + O2 = (11S)-hydroperoxy-(9Z,12Z)-octadecadienoate. The enzyme catalyses (9Z,12Z)-octadecadienoate + O2 = (13R)-hydroperoxy-(9Z,11E)-octadecadienoate. It catalyses the reaction (9Z,12Z,15Z)-octadecatrienoate + O2 = (9S)-hydroperoxy-(10E,12Z,15Z)-octadecatrienoate. The catalysed reaction is (9Z,12Z,15Z)-octadecatrienoate + O2 = (11R)-hydroperoxy-(9Z,12Z,15Z)-octadecatrienoate. It carries out the reaction (9Z,12Z,15Z)-octadecatrienoate + O2 = (13R)-hydroperoxy-(9Z,11E,15Z)-octadecatrienoate. The enzyme catalyses (9S)-hydroperoxy-(10E,12Z,15Z)-octadecatrienoate + O2 = (9S,16S)-dihydroperoxy-(10E,12Z,14E)-octadecatrienoate. Functionally, lipoxygenase that metabolizes linoleic and alpha-linolenic acids to 9S-, 11- and 13R-hydroperoxy fatty acids. At the end of lipoxygenation, the intermediate product 11S-HPODE from linoleic acid is then transformed into 9S-HPODE and 13R-HPODE as the final products. The intermediate product 11R-HPOTrE from alpha-linolenic acid is transformed into 9S-HPOTrE and 13R-HPOTrE as the final products. 9S-HPOTrE is further oxidized by the enzyme to 9S,16S-DiHPOTrE as the end product. This is Manganese lipoxygenase from Pyricularia oryzae (strain 70-15 / ATCC MYA-4617 / FGSC 8958) (Rice blast fungus).